Reading from the N-terminus, the 313-residue chain is uncharacterized protein (313 aa).

6 residues coordinate a divalent metal cation: histidine 8, histidine 10, glutamate 126, histidine 180, histidine 207, and aspartate 262.

The protein belongs to the metallo-dependent hydrolases superfamily. TatD-type hydrolase family. It depends on a divalent metal cation as a cofactor.

Functionally, putative deoxyribonuclease. This is an uncharacterized protein from Saccharomyces cerevisiae (strain ATCC 204508 / S288c) (Baker's yeast).